The sequence spans 389 residues: Succinate--CoA ligase [ADP-forming] subunit beta (389 aa).

An ATP-grasp domain is found at K9–K236. ATP is bound by residues K45, G52 to G54, S94, and E99. N191 and D205 together coordinate Mg(2+). Substrate contacts are provided by residues N256 and G318–T320.

This sequence belongs to the succinate/malate CoA ligase beta subunit family. Heterotetramer of two alpha and two beta subunits. Requires Mg(2+) as cofactor.

It carries out the reaction succinate + ATP + CoA = succinyl-CoA + ADP + phosphate. The catalysed reaction is GTP + succinate + CoA = succinyl-CoA + GDP + phosphate. It functions in the pathway carbohydrate metabolism; tricarboxylic acid cycle; succinate from succinyl-CoA (ligase route): step 1/1. In terms of biological role, succinyl-CoA synthetase functions in the citric acid cycle (TCA), coupling the hydrolysis of succinyl-CoA to the synthesis of either ATP or GTP and thus represents the only step of substrate-level phosphorylation in the TCA. The beta subunit provides nucleotide specificity of the enzyme and binds the substrate succinate, while the binding sites for coenzyme A and phosphate are found in the alpha subunit. This Rhodococcus opacus (strain B4) protein is Succinate--CoA ligase [ADP-forming] subunit beta.